Consider the following 423-residue polypeptide: Serine--tRNA ligase (423 aa).

Position 228 to 230 (228 to 230 (TSE)) interacts with L-serine. 259-261 (RLE) lines the ATP pocket. Glu-282 lines the L-serine pocket. 346–349 (EISS) serves as a coordination point for ATP. Ser-384 contributes to the L-serine binding site.

It belongs to the class-II aminoacyl-tRNA synthetase family. Type-1 seryl-tRNA synthetase subfamily. As to quaternary structure, homodimer. The tRNA molecule binds across the dimer.

It localises to the cytoplasm. The catalysed reaction is tRNA(Ser) + L-serine + ATP = L-seryl-tRNA(Ser) + AMP + diphosphate + H(+). It catalyses the reaction tRNA(Sec) + L-serine + ATP = L-seryl-tRNA(Sec) + AMP + diphosphate + H(+). Its pathway is aminoacyl-tRNA biosynthesis; selenocysteinyl-tRNA(Sec) biosynthesis; L-seryl-tRNA(Sec) from L-serine and tRNA(Sec): step 1/1. In terms of biological role, catalyzes the attachment of serine to tRNA(Ser). Is also able to aminoacylate tRNA(Sec) with serine, to form the misacylated tRNA L-seryl-tRNA(Sec), which will be further converted into selenocysteinyl-tRNA(Sec). The polypeptide is Serine--tRNA ligase (Ehrlichia canis (strain Jake)).